The chain runs to 642 residues: Threonine--tRNA ligase (642 aa).

In terms of domain architecture, TGS spans M1–S61. Residues D243 to P534 form a catalytic region. The Zn(2+) site is built by C334, H385, and H511.

The protein belongs to the class-II aminoacyl-tRNA synthetase family. Homodimer. Zn(2+) is required as a cofactor.

The protein resides in the cytoplasm. It catalyses the reaction tRNA(Thr) + L-threonine + ATP = L-threonyl-tRNA(Thr) + AMP + diphosphate + H(+). Catalyzes the attachment of threonine to tRNA(Thr) in a two-step reaction: L-threonine is first activated by ATP to form Thr-AMP and then transferred to the acceptor end of tRNA(Thr). Also edits incorrectly charged L-seryl-tRNA(Thr). In Buchnera aphidicola subsp. Schizaphis graminum (strain Sg), this protein is Threonine--tRNA ligase.